Consider the following 802-residue polypeptide: Fibroblast growth factor receptor 3 (802 aa).

An Ig-like C2-type 1 domain is found at 27-115 (PDYLMVEQPP…ILRNFTIRVT (89 aa)). Cysteines 52 and 98 form a disulfide. Residues asparagine 74, asparagine 87, and asparagine 109 are each glycosylated (N-linked (GlcNAc...) asparagine). Positions 116–148 (DLPSSGDDEDDDDDDDDETEDREPPRWTQPERM) are disordered. Over residues 121-136 (GDDEDDDDDDDDETED) the composition is skewed to acidic residues. Basic and acidic residues predominate over residues 137–148 (REPPRWTQPERM). 2 consecutive Ig-like C2-type domains span residues 140-233 (PRWT…YQLD) and 242-342 (PILQ…FWLH). A disulfide bond links cysteine 165 and cysteine 217. N-linked (GlcNAc...) asparagine glycans are attached at residues asparagine 214, asparagine 251, asparagine 283, asparagine 303, and asparagine 315. Cysteine 264 and cysteine 326 are disulfide-bonded. A helical membrane pass occupies residues 363–383 (ITVLIVVTSTIVFILLVIIVI). Topologically, residues 384 to 802 (THLMKVPSKK…HQQHNGAIPT (419 aa)) are cytoplasmic. A Protein kinase domain is found at 462–751 (LTLGKPLGEG…LTVTSTNEYL (290 aa)). ATP-binding positions include 468-476 (LGEGCFGQV) and lysine 498. Aspartate 607 serves as the catalytic Proton acceptor. A phosphotyrosine; by autocatalysis mark is found at tyrosine 637, tyrosine 638, tyrosine 714, and tyrosine 750.

It belongs to the protein kinase superfamily. Tyr protein kinase family. Fibroblast growth factor receptor subfamily. In terms of assembly, monomer. Homodimer after ligand binding. Post-translationally, autophosphorylated. Binding of FGF family members together with heparan sulfate proteoglycan or heparin promotes receptor dimerization and autophosphorylation on tyrosine residues. Autophosphorylation occurs in trans between the two FGFR molecules present in the dimer.

It is found in the cell membrane. The enzyme catalyses L-tyrosyl-[protein] + ATP = O-phospho-L-tyrosyl-[protein] + ADP + H(+). Present in an inactive conformation in the absence of bound ligand. Ligand binding leads to dimerization and activation by autophosphorylation on tyrosine residues. Functionally, tyrosine-protein kinase that acts as a cell-surface receptor for fibroblast growth factors and plays an essential role in the regulation of cell proliferation, differentiation and apoptosis. Plays an essential role in the regulation of chondrocyte differentiation, proliferation and apoptosis, and is required for normal skeleton development. Regulates both osteogenesis and postnatal bone mineralization by osteoblasts. Promotes apoptosis in chondrocytes, but can also promote cancer cell proliferation. Phosphorylates PLCG1, CBL and FRS2. Ligand binding leads to the activation of several signaling cascades. Activation of PLCG1 leads to the production of the cellular signaling molecules diacylglycerol and inositol 1,4,5-trisphosphate. Phosphorylation of FRS2 triggers recruitment of GRB2, GAB1, PIK3R1 and SOS1, and mediates activation of RAS, MAPK1/ERK2, MAPK3/ERK1 and the MAP kinase signaling pathway, as well as of the AKT1 signaling pathway. This is Fibroblast growth factor receptor 3 (fgfr3) from Xenopus laevis (African clawed frog).